The chain runs to 310 residues: Ribosomal RNA small subunit methyltransferase H (310 aa).

Residues 33-35 (AGH), Asp53, Phe79, Asp100, and Gln107 contribute to the S-adenosyl-L-methionine site.

Belongs to the methyltransferase superfamily. RsmH family.

Its subcellular location is the cytoplasm. It carries out the reaction cytidine(1402) in 16S rRNA + S-adenosyl-L-methionine = N(4)-methylcytidine(1402) in 16S rRNA + S-adenosyl-L-homocysteine + H(+). Its function is as follows. Specifically methylates the N4 position of cytidine in position 1402 (C1402) of 16S rRNA. In Clostridium tetani (strain Massachusetts / E88), this protein is Ribosomal RNA small subunit methyltransferase H.